Reading from the N-terminus, the 123-residue chain is Unclassified hydrophobin 9 (123 aa).

The signal sequence occupies residues Met-1–Ala-24. Intrachain disulfides connect Cys-37–Cys-103, Cys-45–Cys-97, Cys-46–Cys-88, and Cys-104–Cys-117.

Belongs to the fungal hydrophobin family. In terms of assembly, self-assembles to form functional amyloid fibrils called rodlets. Self-assembly into fibrillar rodlets occurs spontaneously at hydrophobic:hydrophilic interfaces and the rodlets further associate laterally to form amphipathic monolayers.

Its subcellular location is the secreted. The protein localises to the cell wall. Functionally, aerial growth, conidiation, and dispersal of filamentous fungi in the environment rely upon a capability of their secreting small amphipathic proteins called hydrophobins (HPBs) with low sequence identity. Class I can self-assemble into an outermost layer of rodlet bundles on aerial cell surfaces, conferring cellular hydrophobicity that supports fungal growth, development and dispersal; whereas Class II form highly ordered films at water-air interfaces through intermolecular interactions but contribute nothing to the rodlet structure. The sequence is that of Unclassified hydrophobin 9 from Pleurotus ostreatus (strain PC15) (Oyster mushroom).